The chain runs to 257 residues: Protein YIPF5 (257 aa).

The Cytoplasmic portion of the chain corresponds to 1–124; sequence MSGFDNLNSG…RAADGSIMNE (124 aa). Residues 75–106 are interaction with Sec23; that stretch reads PTTPQPFYGDSFEEEPPLLEELGINFDHIWQK. Residues 125–145 form a helical membrane-spanning segment; it reads TDLAGPVVFCLAFGATLLLAG. Lys-146 is a topological domain (lumenal). The helical transmembrane segment at 147 to 167 threads the bilayer; it reads IQFGYVYGISAIGCLGMFCLL. At 168–173 the chain is on the cytoplasmic side; it reads NLMSMT. A helical membrane pass occupies residues 174–194; the sequence is GVSFGCVASVLGYCLLPMILL. Residues 195–196 are Lumenal-facing; it reads SS. A helical membrane pass occupies residues 197–217; sequence FAVVFSLQGMVGILLTATIIG. Over 218–236 the chain is Cytoplasmic; sequence WCSFSASKIFISALAMDGQ. A helical membrane pass occupies residues 237 to 257; the sequence is QLLVAYPCALLYGVFALISVF.

The protein belongs to the YIP1 family. Interacts with the COPII coat components Sec23 (SEC23A and/or SEC23B) and Sec24 (SEC24A and/or SEC24B). Interacts with YIF1A. May interact with RAB1A. Interacts with YIPF3 and YIPF4. In terms of tissue distribution, ubiquitously expressed.

It localises to the golgi apparatus. Its subcellular location is the cis-Golgi network membrane. The protein resides in the cytoplasmic vesicle. It is found in the COPII-coated vesicle. The protein localises to the endoplasmic reticulum membrane. Plays a role in transport between endoplasmic reticulum and Golgi. In pancreatic beta cells, required to transport proinsulin from endoplasmic reticulum into the Golgi. This Mus musculus (Mouse) protein is Protein YIPF5.